The primary structure comprises 48 residues: Small polypeptide DEVIL 22 (48 aa).

A helical transmembrane segment spans residues 7–23; it reads KLNKGHAFTSKCASLVK. Positions 13–44 are required for DVL/RTFL small polypeptide activity; it reads AFTSKCASLVKEQRARLYILRRCATMLCCWYI.

This sequence belongs to the DVL/RTFL small polypeptides family.

It localises to the cell membrane. In terms of biological role, small polypeptide acting as a regulatory molecule which coordinates cellular responses required for differentiation, growth and development, probably by restricting polar cell proliferation in lateral organs and coordinating socket cell recruitment and differentiation at trichome sites. In Arabidopsis thaliana (Mouse-ear cress), this protein is Small polypeptide DEVIL 22.